Consider the following 245-residue polypeptide: tRNA pseudouridine synthase A (245 aa).

Asp52 (nucleophile) is an active-site residue. Substrate is bound at residue Tyr111.

This sequence belongs to the tRNA pseudouridine synthase TruA family. Homodimer.

It carries out the reaction uridine(38/39/40) in tRNA = pseudouridine(38/39/40) in tRNA. Its function is as follows. Formation of pseudouridine at positions 38, 39 and 40 in the anticodon stem and loop of transfer RNAs. The polypeptide is tRNA pseudouridine synthase A (Thermotoga neapolitana (strain ATCC 49049 / DSM 4359 / NBRC 107923 / NS-E)).